We begin with the raw amino-acid sequence, 629 residues long: Arginine--tRNA ligase (629 aa).

The short motif at 128 to 138 is the 'HIGH' region element; the sequence is VNPTKPLHMGH.

The protein belongs to the class-I aminoacyl-tRNA synthetase family.

The protein resides in the cytoplasm. It carries out the reaction tRNA(Arg) + L-arginine + ATP = L-arginyl-tRNA(Arg) + AMP + diphosphate. The chain is Arginine--tRNA ligase (argS) from Pyrococcus horikoshii (strain ATCC 700860 / DSM 12428 / JCM 9974 / NBRC 100139 / OT-3).